The following is a 385-amino-acid chain: dTDP-4-dehydro-2,3,6-trideoxy-D-glucose 4-aminotransferase (385 aa).

Lys-182 is subject to N6-(pyridoxal phosphate)lysine.

Belongs to the DegT/DnrJ/EryC1 family. As to quaternary structure, homodimer. Pyridoxal 5'-phosphate is required as a cofactor.

The catalysed reaction is dTDP-4-amino-2,3,4,6-tetradeoxy-alpha-D-erythro-hexopyranose + 2-oxoglutarate = dTDP-4-dehydro-2,3,6-trideoxy-alpha-D-hexopyranose + L-glutamate. Functionally, involved in the biosynthesis of forosamine ((4-dimethylamino)-2,3,4,6-tetradeoxy-alpha-D-threo-hexopyranose), a highly deoxygenated sugar component of several bioactive natural products such as the insecticidal spinosyns A and D. In the presence of pyridoxal 5'-phosphate (PLP) and alpha-ketoglutarate, catalyzes the C-4 transamination of dTDP-4-keto-2,3,6-trideoxy-alpha-D-glucose to yield dTDP-4-amino-2,3,4,6-tetradeoxy-alpha-D-glucose. It can also use pyruvate, but less efficiently than alpha-ketoglutarate. Also able to catalyze the C-4 transamination of dTDP-4-keto-2,6-dideoxy-alpha-D-glucose to yield dTDP-4-amino-2,4,6-trideoxy-D-glucose. The polypeptide is dTDP-4-dehydro-2,3,6-trideoxy-D-glucose 4-aminotransferase (Saccharopolyspora spinosa).